Consider the following 581-residue polypeptide: Arginine--tRNA ligase (581 aa).

A 'HIGH' region motif is present at residues 126-136 (PNLAKEMHVGH).

This sequence belongs to the class-I aminoacyl-tRNA synthetase family. Monomer.

Its subcellular location is the cytoplasm. The catalysed reaction is tRNA(Arg) + L-arginine + ATP = L-arginyl-tRNA(Arg) + AMP + diphosphate. This is Arginine--tRNA ligase from Shewanella putrefaciens (strain CN-32 / ATCC BAA-453).